The following is a 392-amino-acid chain: Na(+)/H(+) antiporter NhaA (392 aa).

Transmembrane regions (helical) follow at residues 16-36 (ILLI…LSAA), 58-78 (LLLW…GLEV), 93-113 (ITLP…IFIL), 124-144 (GWAI…SLLG), 153-173 (IFLM…IALF), 176-196 (TDLS…LFIM), 199-219 (MDVA…VSVL), 257-277 (DLHY…NAGV), 295-315 (VMLG…WLAI), 328-348 (WMML…SLFV), and 362-382 (ADKL…YLIL).

Belongs to the NhaA Na(+)/H(+) (TC 2.A.33) antiporter family.

The protein resides in the cell inner membrane. The enzyme catalyses Na(+)(in) + 2 H(+)(out) = Na(+)(out) + 2 H(+)(in). In terms of biological role, na(+)/H(+) antiporter that extrudes sodium in exchange for external protons. In Sulfurovum sp. (strain NBC37-1), this protein is Na(+)/H(+) antiporter NhaA.